The chain runs to 1020 residues: Calcium-transporting ATPase 10, plasma membrane-type (1020 aa).

Topologically, residues 1–175 (MESYLEENFG…FVWEALQDTT (175 aa)) are cytoplasmic. The tract at residues 21–32 (ALRRWRKLCGVV) is interaction with calmodulin. 2 helical membrane-spanning segments follow: residues 176–196 (LIIL…MEGW) and 199–219 (GAHD…VTAT). Residues 220–263 (SDYRQSLQFKDLDKEKKKIQVQVTRNGFRQRLSIYDLLPGDVVH) lie on the Cytoplasmic side of the membrane. The next 2 membrane-spanning stretches (helical) occupy residues 264-284 (LAIG…SLLI) and 352-372 (GVAT…FIVL). Residues 373–400 (SQGLISKKYHEGLLLSWSGDDALEMLEH) are Cytoplasmic-facing. A helical membrane pass occupies residues 401–421 (FAIAVTIVVVAVPEGLPLAVT). Asp456 acts as the 4-aspartylphosphate intermediate in catalysis. Residues Asp758 and Asp762 each contribute to the Mg(2+) site. A helical transmembrane segment spans residues 843-863 (LTAVQLLWVNMIMDTLGALAL). The Cytoplasmic portion of the chain corresponds to 864-887 (ATEPPNDDLMKREPVGRTGKFITN). A run of 2 helical transmembrane segments spans residues 888 to 907 (VMWR…MWYL) and 924 to 944 (VVLN…NEIS). At 945-961 (SREMEKINVLRGILKNY) the chain is on the cytoplasmic side. Transmembrane regions (helical) follow at residues 962-982 (VFLG…QFLG) and 995-1015 (WIAS…IKLL). Residues 1016–1020 (PVGSS) are Cytoplasmic-facing.

It belongs to the cation transport ATPase (P-type) (TC 3.A.3) family. Type IIB subfamily.

The protein localises to the membrane. It carries out the reaction Ca(2+)(in) + ATP + H2O = Ca(2+)(out) + ADP + phosphate + H(+). With respect to regulation, activated by calmodulin. Functionally, this magnesium-dependent enzyme catalyzes the hydrolysis of ATP coupled with the translocation of calcium from the cytosol out of the cell, into the endoplasmic reticulum, or into organelles. This Oryza sativa subsp. japonica (Rice) protein is Calcium-transporting ATPase 10, plasma membrane-type.